The following is a 316-amino-acid chain: Probable cell division protein WhiA (316 aa).

A DNA-binding region (H-T-H motif) is located at residues 275-309 (TLKELGEMVSSGKISKSGINHRLRKLDEIAEQLRS).

It belongs to the WhiA family.

Involved in cell division and chromosome segregation. The sequence is that of Probable cell division protein WhiA from Bacillus licheniformis (strain ATCC 14580 / DSM 13 / JCM 2505 / CCUG 7422 / NBRC 12200 / NCIMB 9375 / NCTC 10341 / NRRL NRS-1264 / Gibson 46).